Reading from the N-terminus, the 487-residue chain is MDPVAGLVLGLCCLLLLSLWKQNSGRGKLPPGPTPFPIIGNILQIDVKDISKSLTKFSERYGPVFTVYLGMKPTVVLHGYKAVKEALVDLGEEFAGRGHFPIAEKVNKGLGIVFTNANTWKEMRRFSLMTLRNFGMGKRSIEDRVQEEARCLVEELRKTNALPCDPTFILGCAPCNVICSVILHNRFDYKDEEFLKLMERLNENIRILSSPWLQVYNNFPALLDYFPGIHKTLLKNADYTKNFIMEKVKEHQKLLDVNNPRDFIDCFLIKMEKENNLEFTLGSLVIAVFDLFGAGTETTSTTLRYSLLLLLKHPEVAARVQEEIERVIGRHRSPCMQDRSHMPYTDAVIHEIQRFIDLLPTNLPHAVTRDVKFRNYFIPKGTDIITSLTSVLHDEKAFPNPKVFDPGHFLDESGNFKKSDYFMPFSAGKRMCVGEGLARMELFLFLTSILQNFKLQSLVEPKDLDITAVVNGFVSVPPSYQLCFIPI.

A heme-binding site is contributed by cysteine 432.

The protein belongs to the cytochrome P450 family. Heme is required as a cofactor.

It is found in the endoplasmic reticulum membrane. It localises to the microsome membrane. It carries out the reaction an organic molecule + reduced [NADPH--hemoprotein reductase] + O2 = an alcohol + oxidized [NADPH--hemoprotein reductase] + H2O + H(+). In terms of biological role, cytochromes P450 are a group of heme-thiolate monooxygenases. In liver microsomes, this enzyme is involved in an NADPH-dependent electron transport pathway. It oxidizes a variety of structurally unrelated compounds, including steroids, fatty acids, and xenobiotics. This chain is Cytochrome P450 2C4 (CYP2C4), found in Oryctolagus cuniculus (Rabbit).